The sequence spans 153 residues: Protein SprT-like (153 aa).

Residues 7–145 (QTLVEKISIV…VCGKCHGRLS (139 aa)) form the SprT-like domain. His-67 is a binding site for Zn(2+). Glu-68 is an active-site residue. His-71 contributes to the Zn(2+) binding site.

This sequence belongs to the SprT family. Requires Zn(2+) as cofactor.

The protein localises to the cytoplasm. The protein is Protein SprT-like of Enterococcus faecalis (strain ATCC 700802 / V583).